The chain runs to 330 residues: Poly(3-hydroxyalkanoate) polymerase subunit PhaE (330 aa).

Residues 298–328 are a coiled coil; that stretch reads RSEVDEIHQTIYQLRKEVKSLKKRLGETEAN.

Belongs to the PHA/PHB synthase family. Type III PhaE subfamily. In terms of assembly, forms a heterodimer with PhaC, which may multimerize in the presence of 3-hydroxybutyryl-CoA. Both subunits are required for PHB synthesis in E.coli and in PHA-negative A.eutrophus.

It is found in the cytoplasm. It participates in biopolymer metabolism; poly-(R)-3-hydroxybutanoate biosynthesis. Its function is as follows. When expressed in E.coli with Synechocystis PhaC and C.necator PhaA and PhaB, confers the ability to synthesize up to 13% (w/w) poly(3-hydroxybutyrate) (PHB) depending on the carbon source; all 4 genes are necessary for PHB production. Cell-free in vitro coexpression with PhaE gives a heterodimer able to polymerize 3-hydroxybutyrate-CoA. This subunit has no catalytic activity but enhances the activity of PhaC, the catalytic subunit. This Synechocystis sp. (strain ATCC 27184 / PCC 6803 / Kazusa) protein is Poly(3-hydroxyalkanoate) polymerase subunit PhaE.